The primary structure comprises 142 residues: Transcriptional regulator MraZ (142 aa).

SpoVT-AbrB domains are found at residues 5–47 (EYQH…PLDE) and 76–119 (ACEV…SKEK).

It belongs to the MraZ family. As to quaternary structure, forms oligomers.

Its subcellular location is the cytoplasm. It localises to the nucleoid. This is Transcriptional regulator MraZ from Clostridium beijerinckii (strain ATCC 51743 / NCIMB 8052) (Clostridium acetobutylicum).